We begin with the raw amino-acid sequence, 104 residues long: Large ribosomal subunit protein uL24 (104 aa).

The protein belongs to the universal ribosomal protein uL24 family. In terms of assembly, part of the 50S ribosomal subunit.

In terms of biological role, one of two assembly initiator proteins, it binds directly to the 5'-end of the 23S rRNA, where it nucleates assembly of the 50S subunit. One of the proteins that surrounds the polypeptide exit tunnel on the outside of the subunit. The chain is Large ribosomal subunit protein uL24 from Salmonella paratyphi A (strain ATCC 9150 / SARB42).